Consider the following 268-residue polypeptide: Tryptophan synthase alpha chain (268 aa).

Active-site proton acceptor residues include Glu49 and Asp60.

The protein belongs to the TrpA family. In terms of assembly, tetramer of two alpha and two beta chains.

It carries out the reaction (1S,2R)-1-C-(indol-3-yl)glycerol 3-phosphate + L-serine = D-glyceraldehyde 3-phosphate + L-tryptophan + H2O. It participates in amino-acid biosynthesis; L-tryptophan biosynthesis; L-tryptophan from chorismate: step 5/5. The alpha subunit is responsible for the aldol cleavage of indoleglycerol phosphate to indole and glyceraldehyde 3-phosphate. This is Tryptophan synthase alpha chain from Shigella sonnei (strain Ss046).